The following is a 123-amino-acid chain: Ribosome-binding factor A (123 aa).

The protein belongs to the RbfA family. As to quaternary structure, monomer. Binds 30S ribosomal subunits, but not 50S ribosomal subunits or 70S ribosomes.

It localises to the cytoplasm. Functionally, one of several proteins that assist in the late maturation steps of the functional core of the 30S ribosomal subunit. Associates with free 30S ribosomal subunits (but not with 30S subunits that are part of 70S ribosomes or polysomes). Required for efficient processing of 16S rRNA. May interact with the 5'-terminal helix region of 16S rRNA. The chain is Ribosome-binding factor A from Geotalea daltonii (strain DSM 22248 / JCM 15807 / FRC-32) (Geobacter daltonii).